The primary structure comprises 141 residues: Nucleoside diphosphate kinase (141 aa).

The ATP site is built by lysine 11, phenylalanine 59, arginine 87, threonine 93, arginine 104, and asparagine 114. Histidine 117 serves as the catalytic Pros-phosphohistidine intermediate.

This sequence belongs to the NDK family. In terms of assembly, homotetramer. Mg(2+) is required as a cofactor.

It localises to the cytoplasm. It carries out the reaction a 2'-deoxyribonucleoside 5'-diphosphate + ATP = a 2'-deoxyribonucleoside 5'-triphosphate + ADP. The catalysed reaction is a ribonucleoside 5'-diphosphate + ATP = a ribonucleoside 5'-triphosphate + ADP. Major role in the synthesis of nucleoside triphosphates other than ATP. The ATP gamma phosphate is transferred to the NDP beta phosphate via a ping-pong mechanism, using a phosphorylated active-site intermediate. The chain is Nucleoside diphosphate kinase from Pseudomonas putida (strain W619).